Here is a 279-residue protein sequence, read N- to C-terminus: MTIDRYAVIGNPISHSRSPAIHAEFARQTGQQLSYEALLAPLDGFRDAVERFRRAGGRGMNVTVPFKLEAFALTDRCAPRASAAGAVNTLAFGPDGIFGDNTDGAGLIRDIVHNLDRPLERQRVLLLGAGGAARGVLLPLLAARPASLTLANRSVDKAHALAAAFRSHAPDVALDACSFVDLAGRVFDVVINATAASLANEAPQLPPGLYAANALAYDMMYGCGDTPFLAAARSDGATQRADGLGMLVEQAAESFLLWRGVRPDTAAVLAALRRQLDGG.

Shikimate contacts are provided by residues 16-18 and Thr-63; that span reads SRS. Catalysis depends on Lys-67, which acts as the Proton acceptor. The shikimate site is built by Asn-88 and Asp-103. NADP(+) is bound by residues 128–132 and Met-219; that span reads GAGGA. A shikimate-binding site is contributed by Tyr-221. Gly-243 lines the NADP(+) pocket.

Belongs to the shikimate dehydrogenase family. Homodimer.

The enzyme catalyses shikimate + NADP(+) = 3-dehydroshikimate + NADPH + H(+). Its pathway is metabolic intermediate biosynthesis; chorismate biosynthesis; chorismate from D-erythrose 4-phosphate and phosphoenolpyruvate: step 4/7. Involved in the biosynthesis of the chorismate, which leads to the biosynthesis of aromatic amino acids. Catalyzes the reversible NADPH linked reduction of 3-dehydroshikimate (DHSA) to yield shikimate (SA). This Aromatoleum aromaticum (strain DSM 19018 / LMG 30748 / EbN1) (Azoarcus sp. (strain EbN1)) protein is Shikimate dehydrogenase (NADP(+)).